Consider the following 302-residue polypeptide: Zinc transporter ZIP1 (302 aa).

Over 1 to 6 the chain is Extracellular; the sequence is MEYLLQ. Residues 7–27 traverse the membrane as a helical segment; the sequence is VKIAALVGLLFLTLIFGFIPA. The Cytoplasmic portion of the chain corresponds to 28–44; the sequence is RVKWFRDTDGTETHRTV. Residues 45 to 65 form a helical membrane-spanning segment; that stretch reads LSLISCFAGGVFLSACFLDII. The Extracellular segment spans residues 66-80; it reads PDYLSDINTELHARQ. A helical transmembrane segment spans residues 81–101; the sequence is LETSFPLPEFIMAAGFFTVLI. At 102 to 158 the chain is on the cytoplasmic side; that stretch reads LERIVLNCKEMRATHEERTTLIPERKSGHGHGHGDGPDPESSGHHVHVDFQAHSPFR. Residues 123-145 are disordered; sequence IPERKSGHGHGHGDGPDPESSGH. A helical transmembrane segment spans residues 159 to 179; the sequence is SFMLFLSLSLHSIFEGLAIGL. At 180 to 185 the chain is on the extracellular side; that stretch reads QTTDPK. The chain crosses the membrane as a helical span at residues 186–206; it reads VVEICIAILVHKSIIVFSLAV. The Cytoplasmic segment spans residues 207 to 216; that stretch reads KLVQSAIPPL. A helical transmembrane segment spans residues 217-237; the sequence is WVAAYIGVFALMSPVGIAIGI. Residues 238 to 251 are Extracellular-facing; that stretch reads SVMEAQLAAGPLIQ. Residues 252–272 traverse the membrane as a helical segment; sequence AILEGFAAGTFVYITFLEILP. Residues 273-281 lie on the Cytoplasmic side of the membrane; it reads HELNSPGKQ. The helical transmembrane segment at 282-302 threads the bilayer; that stretch reads LLKVLFLLLGFSIMAALSFLG.

It belongs to the ZIP transporter (TC 2.A.5) family. In terms of tissue distribution, highest levels in ovary, lower levels in intestine and gill, barely detected in kidney.

Its subcellular location is the cell membrane. The protein resides in the endoplasmic reticulum membrane. It catalyses the reaction Zn(2+)(in) = Zn(2+)(out). Transporter for the divalent cation Zn(2+). Mediates the influx of Zn(2+) into cells from extracellular space. The sequence is that of Zinc transporter ZIP1 (slc39a1) from Takifugu rubripes (Japanese pufferfish).